The following is a 555-amino-acid chain: CTP synthase (555 aa).

The amidoligase domain stretch occupies residues 1 to 265 (MTRYIFITGG…GNRVCEKLNI (265 aa)). Ser-13 contributes to the CTP binding site. Ser-13 is a binding site for UTP. ATP-binding positions include 14–19 (SLGKGI) and Asp-71. Asp-71 and Glu-139 together coordinate Mg(2+). CTP is bound by residues 146–148 (DIE), 186–191 (KTKPTQ), and Lys-222. UTP-binding positions include 186–191 (KTKPTQ) and Lys-222. Residues 290–541 (TVAVVGKYVD…IKAGLAAKEA (252 aa)) form the Glutamine amidotransferase type-1 domain. Gly-351 contacts L-glutamine. Cys-378 serves as the catalytic Nucleophile; for glutamine hydrolysis. L-glutamine contacts are provided by residues 379-382 (LGMQ), Glu-402, and Arg-469. Catalysis depends on residues His-514 and Glu-516.

Belongs to the CTP synthase family. Homotetramer.

It carries out the reaction UTP + L-glutamine + ATP + H2O = CTP + L-glutamate + ADP + phosphate + 2 H(+). The catalysed reaction is L-glutamine + H2O = L-glutamate + NH4(+). It catalyses the reaction UTP + NH4(+) + ATP = CTP + ADP + phosphate + 2 H(+). Its pathway is pyrimidine metabolism; CTP biosynthesis via de novo pathway; CTP from UDP: step 2/2. Its activity is regulated as follows. Allosterically activated by GTP, when glutamine is the substrate; GTP has no effect on the reaction when ammonia is the substrate. The allosteric effector GTP functions by stabilizing the protein conformation that binds the tetrahedral intermediate(s) formed during glutamine hydrolysis. Inhibited by the product CTP, via allosteric rather than competitive inhibition. Catalyzes the ATP-dependent amination of UTP to CTP with either L-glutamine or ammonia as the source of nitrogen. Regulates intracellular CTP levels through interactions with the four ribonucleotide triphosphates. This Coxiella burnetii (strain Dugway 5J108-111) protein is CTP synthase.